A 396-amino-acid chain; its full sequence is S-adenosylmethionine synthase (396 aa).

H16 contacts ATP. A Mg(2+)-binding site is contributed by D18. E44 lines the K(+) pocket. 2 residues coordinate L-methionine: E57 and Q100. Residues 100–110 form a flexible loop region; that stretch reads QSVDIAQGVDR. ATP-binding positions include 165 to 167, D240, 246 to 247, A263, and K267; these read DAK and RK. L-methionine is bound at residue D240. K271 lines the L-methionine pocket.

Belongs to the AdoMet synthase family. Homotetramer; dimer of dimers. It depends on Mg(2+) as a cofactor. K(+) serves as cofactor.

Its subcellular location is the cytoplasm. The catalysed reaction is L-methionine + ATP + H2O = S-adenosyl-L-methionine + phosphate + diphosphate. Its pathway is amino-acid biosynthesis; S-adenosyl-L-methionine biosynthesis; S-adenosyl-L-methionine from L-methionine: step 1/1. Catalyzes the formation of S-adenosylmethionine (AdoMet) from methionine and ATP. The overall synthetic reaction is composed of two sequential steps, AdoMet formation and the subsequent tripolyphosphate hydrolysis which occurs prior to release of AdoMet from the enzyme. This chain is S-adenosylmethionine synthase, found in Stutzerimonas stutzeri (strain A1501) (Pseudomonas stutzeri).